The following is a 354-amino-acid chain: Membrane progestin receptor beta (354 aa).

At 1-75 (MTTAILERLS…FFSLFQKHNE (75 aa)) the chain is on the cytoplasmic side. The helical transmembrane segment at 76–96 (VVNVWTHLLAALAVLLRFWAF) threads the bilayer. The Extracellular portion of the chain corresponds to 97–111 (AEAEALPWASTHSLP). Residues 112–132 (LLLFILSSITYLTCSLLAHLL) traverse the membrane as a helical segment. Over 133–174 (QSKSELSHYTFYFVDYVGVSVYQYGSALAHFFYSSDQAWYDR) the chain is Cytoplasmic. A helical transmembrane segment spans residues 175–195 (FWLFFLPAAAFCGWLSCAGCC). At 196–213 (YAKYRYRRPYPVMRKICQ) the chain is on the extracellular side. The helical transmembrane segment at 214–234 (VVPAGLAFILDISPVAHRVAL) threads the bilayer. The Cytoplasmic segment spans residues 235–243 (CHLAGCQEQ). A helical membrane pass occupies residues 244-264 (AAWYHTLQILFFLVSAYFFSC). Residues 265-283 (PVPEKYFPGSCDIVGHGHQ) are Extracellular-facing. The chain crosses the membrane as a helical span at residues 284–304 (IFHAFLSICTLSQLEAILLDY). Residues 305–319 (QGRQEIFLQRHGPLS) lie on the Cytoplasmic side of the membrane. Residues 320 to 340 (VHMACLSFFFLAACSAATAAL) form a helical membrane-spanning segment. Residues 341 to 354 (LRHKVKARLTKKDS) are Extracellular-facing.

Belongs to the ADIPOR family. Highly expressed in the hypothalamus. Also expressed in spinal cord, kidney and testis.

It is found in the cell membrane. Its function is as follows. Plasma membrane progesterone (P4) receptor coupled to G proteins. Seems to act through a G(i) mediated pathway. May be involved in oocyte maturation. Also binds dehydroepiandrosterone (DHEA), pregnanolone, pregnenolone and allopregnanolone. This Homo sapiens (Human) protein is Membrane progestin receptor beta.